We begin with the raw amino-acid sequence, 541 residues long: Arginine--tRNA ligase (541 aa).

The short motif at Ala-119–His-129 is the 'HIGH' region element.

It belongs to the class-I aminoacyl-tRNA synthetase family. In terms of assembly, monomer.

The protein resides in the cytoplasm. It carries out the reaction tRNA(Arg) + L-arginine + ATP = L-arginyl-tRNA(Arg) + AMP + diphosphate. The protein is Arginine--tRNA ligase (argS) of Helicobacter pylori (strain ATCC 700392 / 26695) (Campylobacter pylori).